A 221-amino-acid chain; its full sequence is MQLPLTPLSFSGTLLLMAMSNFLLWEHVTSSASPRLSTRNLYQRVVELSHCTHDLASKVFTDFNMKFGKSICRQKLMLYTCHTSSIPTPENREQVHQTNSEDLLKVTISVLQAWEEPVKHMVAAVAALPGTSDAMLSRAKELEERVLGLLEGLKIILNRIHPGAVENDYTFWSGWSDLQSSDEATRNIAFYTMGRCLRRDTHKVDNYLKVLKCRDIHNNNC.

Residues 1-30 (MQLPLTPLSFSGTLLLMAMSNFLLWEHVTS) form the signal peptide. Cystine bridges form between Cys81/Cys196 and Cys213/Cys221.

Belongs to the somatotropin/prolactin family.

The protein localises to the secreted. In Mesocricetus auratus (Golden hamster), this protein is Prolactin-3B1 (PRL3B1).